We begin with the raw amino-acid sequence, 454 residues long: uncharacterized protein (454 aa).

A disordered region spans residues 1–25 (MHGPTSKAISRNVRSVKRPRRAPRP). Positions 14–23 (RSVKRPRRAP) are enriched in basic residues.

It is found in the cytoplasm. Its subcellular location is the nucleus. This is an uncharacterized protein from Saccharomyces cerevisiae (strain ATCC 204508 / S288c) (Baker's yeast).